The chain runs to 133 residues: Holo-[acyl-carrier-protein] synthase (133 aa).

Mg(2+) contacts are provided by D8 and E57.

Belongs to the P-Pant transferase superfamily. AcpS family. It depends on Mg(2+) as a cofactor.

Its subcellular location is the cytoplasm. It catalyses the reaction apo-[ACP] + CoA = holo-[ACP] + adenosine 3',5'-bisphosphate + H(+). Functionally, transfers the 4'-phosphopantetheine moiety from coenzyme A to a Ser of acyl-carrier-protein. In Caulobacter vibrioides (strain ATCC 19089 / CIP 103742 / CB 15) (Caulobacter crescentus), this protein is Holo-[acyl-carrier-protein] synthase.